A 192-amino-acid polypeptide reads, in one-letter code: Large ribosomal subunit protein uL5 (192 aa).

This sequence belongs to the universal ribosomal protein uL5 family. Part of the 50S ribosomal subunit; part of the 5S rRNA/L5/L18/L25 subcomplex. Contacts the 5S rRNA and the P site tRNA. Forms a bridge to the 30S subunit in the 70S ribosome.

Its function is as follows. This is one of the proteins that bind and probably mediate the attachment of the 5S RNA into the large ribosomal subunit, where it forms part of the central protuberance. In the 70S ribosome it contacts protein S13 of the 30S subunit (bridge B1b), connecting the 2 subunits; this bridge is implicated in subunit movement. Contacts the P site tRNA; the 5S rRNA and some of its associated proteins might help stabilize positioning of ribosome-bound tRNAs. The chain is Large ribosomal subunit protein uL5 from Mesorhizobium japonicum (strain LMG 29417 / CECT 9101 / MAFF 303099) (Mesorhizobium loti (strain MAFF 303099)).